Consider the following 1098-residue polypeptide: Ran-binding protein 16 (1098 aa).

This sequence belongs to the exportin family. In terms of assembly, binds to nucleoporins and the GTP-bound form of Ran.

The protein resides in the cytoplasm. The protein localises to the nucleus. Functionally, may function as a nuclear transport receptor. In Drosophila melanogaster (Fruit fly), this protein is Ran-binding protein 16 (Ranbp16).